Reading from the N-terminus, the 191-residue chain is MGGSGSRLSKELLAEYQDLTFLTKQEILLAHRRFCELLPPEQRTVEESLHTRVSFEQILSLPELKANPFKERICMVFSTSPTRDSLSFEDFLDLLSVFSDTATPDIKSHYAFRIFDFDDDGTLDREDLSQLVNCLTGEGEDTRLSASEMKQLIDNILEESDIDRDGTINLSEFQHVISRSPDFASSFKIVL.

Gly-2 is lipidated: N-myristoyl glycine. 2 EF-hand domains span residues 103-138 (TPDI…LTGE) and 148-183 (EMKQ…SPDF). Positions 116, 118, 120, 122, 127, 161, 163, 165, 167, and 172 each coordinate Ca(2+).

In terms of assembly, monomer. Interacts with the heterodimeric integrin alpha-IIb/beta3 (ITGA2B-ITGB3). Interacts with ITGA2B (via cytoplasmic domain); the interaction is direct and calcium-dependent. Interacts with the protein kinases PLK2/SNK and PRKDC (via the region immediately upstream of the kinase domain). Interacts with PLK3; the interaction inhibits PLK3 kinase activity. Interacts with PSEN2. Interacts (via C-terminus) with F8. Interacts with NBR1 (via C-terminus). Interacts with FEZ1 (via C-terminus). Interacts with UBR5 (via C-terminus); the interaction is sensitive to DNA damage, and may target CIB1 for ubiquitin-mediated degradation. Interacts with IFI6; the interaction is direct. Interacts with BCL2. Interacts with TAS1R2 (via C-terminus); the interaction is independent of the myristoylation state of CIB1. Interacts with ITPR3; the interaction occurs in a calcium dependent manner. Interacts with PTK2/FAK1. Interacts with MAP3K5; the interaction inhibits MAP3K5 activation by phosphorylation, and its subsequent interaction with TRAF2. Interacts (via C-terminal region) with STMN2 (via the N-terminal region); the interaction is direct, occurs in a calcium-dependent manner and attenuates the STMN2-induced neurite outgrowth inhibition. Interacts with SPHK1, the interaction occurs in a calcium-dependent manner. Interacts with ITGA2B (via C-terminal cytoplasmic tail); the interaction occurs upon platelet aggregation and is stabilized/increased in a calcium and magnesium-dependent manner. Interacts with PAK1 (via N-terminal region); the interaction is direct and occurs in a calcium-dependent manner. Interacts with RAC3 (via C-terminal region); the interaction induces their association with the cytoskeleton upon alpha-IIb/beta3 integrin-mediated adhesion. Interacts with ITGA5 and ITGAV. Interacts with MYO1C. Interacts with ITGA2B (via C-terminal cytoplasmic tail region). Interacts (via C-terminal region) with PPP3R1 isoform 1 and isoform 2; the interactions increase upon cardiomyocytes hypertrophy. Interacts with CACNA1C; the interaction increases upon cardiomyocytes hypertrophy. Interacts and forms a complex with TMC6 and TMC8; the interaction stabilizes each component of the complex. Expressed strongly in Sertoli cells, weakly in pachytene spermatocytes, round spermatids and condensing spermatids (at protein level). Expressed in testis. Expressed in cardiac myocytes and endothelial cells. Expressed in heart, liver, spleen, lung, kidney, brain and inner ear. In the inner ear, expressed in the vestibule, basilar membrane and spiral ganglion cells.

Its subcellular location is the membrane. It is found in the cell membrane. The protein localises to the sarcolemma. The protein resides in the apical cell membrane. It localises to the cell projection. Its subcellular location is the ruffle membrane. It is found in the filopodium tip. The protein localises to the growth cone. The protein resides in the lamellipodium. It localises to the cytoplasm. Its subcellular location is the cytoskeleton. It is found in the microtubule organizing center. The protein localises to the centrosome. The protein resides in the perinuclear region. It localises to the nucleus. Its subcellular location is the neuron projection. It is found in the perikaryon. Calcium-binding protein that plays a role in the regulation of numerous cellular processes, such as cell differentiation, cell division, cell proliferation, cell migration, thrombosis, angiogenesis, cardiac hypertrophy and apoptosis. Involved in bone marrow megakaryocyte differentiation by negatively regulating thrombopoietin-mediated signaling pathway. Participates in the endomitotic cell cycle of megakaryocyte, a form of mitosis in which both karyokinesis and cytokinesis are interrupted. Plays a role in integrin signaling by negatively regulating alpha-IIb/beta3 activation in thrombin-stimulated megakaryocytes preventing platelet aggregation. Up-regulates PTK2/FAK1 activity, and is also needed for the recruitment of PTK2/FAK1 to focal adhesions; it thus appears to play an important role in focal adhesion formation. Positively regulates cell migration on fibronectin in a CDC42-dependent manner, the effect being negatively regulated by PAK1. Functions as a negative regulator of stress activated MAP kinase (MAPK) signaling pathways. Down-regulates inositol 1,4,5-trisphosphate receptor-dependent calcium signaling. Involved in sphingosine kinase SPHK1 translocation to the plasma membrane in a N-myristoylation-dependent manner preventing TNF-alpha-induced apoptosis. Regulates serine/threonine-protein kinase PLK3 activity for proper completion of cell division progression. Plays a role in microtubule (MT) dynamics during neuronal development; disrupts the MT depolymerization activity of STMN2 attenuating NGF-induced neurite outgrowth and the MT reorganization at the edge of lamellipodia. Promotes cardiomyocyte hypertrophy via activation of the calcineurin/NFAT signaling pathway. Stimulates calcineurin PPP3R1 activity by mediating its anchoring to the sarcolemma. In ischemia-induced (pathological or adaptive) angiogenesis, stimulates endothelial cell proliferation, migration and microvessel formation by activating the PAK1 and ERK1/ERK2 signaling pathway. Also promotes cancer cell survival and proliferation. May regulate cell cycle and differentiation of spermatogenic germ cells, and/or differentiation of supporting Sertoli cells. Forms a complex with TMC6/EVER1 and TMC8/EVER2 in lymphocytes and keratynocytes where CIB1 stabilizes TMC6 and TMC8 levels and reciprocally. In Mus musculus (Mouse), this protein is Calcium and integrin-binding protein 1 (Cib1).